The sequence spans 574 residues: MAKKNSQLPSTSEQILERSTTGATFLMMGQLFTKLVTFILNNLLIRFLSPRIFGITAFLEFIQGTVLFFSRDAIRLSTLRISDSGNGIIDDDDEEEYQETHYKSKVLQTAVNFAYIPFWIGFPLSIGLIAWQYRNINAYFITLPFFRWSIFLIWLSIIVELLSEPFFIVNQFMLNYAARSRFESIAVTTGCIVNFIVVYAVQQSRYPMGVVTSDIDKEGIAILAFALGKLAHSITLLACYYWDYLKNFKPKKLFSTRLTKIKTRENNELKKGYPKSTSYFFQNDILQHFKKVYFQLCFKHLLTEGDKLIINSLCTVEEQGIYALLSNYGSLLTRLLFAPIEESLRLFLARLLSSHNPKNLKLSIEVLVNLTRFYIYLSLMIIVFGPANSSFLLQFLIGSKWSTTSVLDTIRVYCFYIPFLSLNGIFEAFFQSVATGDQILKHSYFMMAFSGIFLLNSWLLIEKLKLSIEGLILSNIINMVLRILYCGVFLNKFHRELFTDSSFFFNFKDFKTVIIAGSTICLLDWWFIGYVKNLQQFVVNVLFAMGLLALILVKERQTIQSFINKRAVSNSKDV.

Topologically, residues 1 to 24 are lumenal; the sequence is MAKKNSQLPSTSEQILERSTTGAT. Residues 25 to 45 form a helical membrane-spanning segment; that stretch reads FLMMGQLFTKLVTFILNNLLI. Topologically, residues 46-48 are cytoplasmic; sequence RFL. Residues 49 to 69 form a helical membrane-spanning segment; the sequence is SPRIFGITAFLEFIQGTVLFF. Residues 70-110 are Lumenal-facing; it reads SRDAIRLSTLRISDSGNGIIDDDDEEEYQETHYKSKVLQTA. Residues 111–131 traverse the membrane as a helical segment; that stretch reads VNFAYIPFWIGFPLSIGLIAW. The Cytoplasmic segment spans residues 132-148; sequence QYRNINAYFITLPFFRW. The chain crosses the membrane as a helical span at residues 149 to 169; it reads SIFLIWLSIIVELLSEPFFIV. Over 170 to 181 the chain is Lumenal; the sequence is NQFMLNYAARSR. The chain crosses the membrane as a helical span at residues 182-202; it reads FESIAVTTGCIVNFIVVYAVQ. Over 203–218 the chain is Cytoplasmic; it reads QSRYPMGVVTSDIDKE. The helical transmembrane segment at 219-239 threads the bilayer; sequence GIAILAFALGKLAHSITLLAC. Topologically, residues 240 to 319 are lumenal; that stretch reads YYWDYLKNFK…INSLCTVEEQ (80 aa). The chain crosses the membrane as a helical span at residues 320-340; that stretch reads GIYALLSNYGSLLTRLLFAPI. The Cytoplasmic portion of the chain corresponds to 341 to 372; it reads EESLRLFLARLLSSHNPKNLKLSIEVLVNLTR. The helical transmembrane segment at 373–393 threads the bilayer; it reads FYIYLSLMIIVFGPANSSFLL. The Lumenal segment spans residues 394-413; sequence QFLIGSKWSTTSVLDTIRVY. The helical transmembrane segment at 414 to 434 threads the bilayer; the sequence is CFYIPFLSLNGIFEAFFQSVA. The Cytoplasmic segment spans residues 435–443; it reads TGDQILKHS. The helical transmembrane segment at 444–464 threads the bilayer; it reads YFMMAFSGIFLLNSWLLIEKL. Over 465 to 469 the chain is Lumenal; it reads KLSIE. Residues 470 to 490 form a helical membrane-spanning segment; it reads GLILSNIINMVLRILYCGVFL. The Cytoplasmic segment spans residues 491–509; sequence NKFHRELFTDSSFFFNFKD. A helical membrane pass occupies residues 510–530; sequence FKTVIIAGSTICLLDWWFIGY. The Lumenal portion of the chain corresponds to 531–532; sequence VK. The helical transmembrane segment at 533–553 threads the bilayer; the sequence is NLQQFVVNVLFAMGLLALILV. Residues 554-574 are Cytoplasmic-facing; it reads KERQTIQSFINKRAVSNSKDV.

This sequence belongs to the RFT1 family.

The protein localises to the endoplasmic reticulum membrane. It functions in the pathway protein modification; protein glycosylation. Intramembrane glycolipid transporter that operates in the biosynthetic pathway of dolichol-linked oligosaccharides, the glycan precursors employed in protein asparagine (N)-glycosylation. The sequential addition of sugars to dolichol pyrophosphate produces dolichol-linked oligosaccharides containing fourteen sugars, including two GlcNAcs, nine mannoses and three glucoses. Once assembled, the oligosaccharide is transferred from the lipid to nascent proteins by oligosaccharyltransferases. The assembly of dolichol-linked oligosaccharides begins on the cytosolic side of the endoplasmic reticulum membrane and finishes in its lumen. RFT1 could mediate the translocation of the cytosolically oriented intermediate DolPP-GlcNAc2Man5, produced by ALG11, into the ER lumen where dolichol-linked oligosaccharides assembly continues. However, the intramembrane lipid transporter activity could not be confirmed in vitro. The polypeptide is Man(5)GlcNAc(2)-PP-dolichol translocation protein RFT1 (Saccharomyces cerevisiae (strain ATCC 204508 / S288c) (Baker's yeast)).